The following is a 161-amino-acid chain: NADH-quinone oxidoreductase subunit I (161 aa).

4Fe-4S ferredoxin-type domains follow at residues 52–82 (LRRY…IEAK) and 92–121 (TKYD…EGPN). The [4Fe-4S] cluster site is built by cysteine 62, cysteine 65, cysteine 68, cysteine 72, cysteine 101, cysteine 104, cysteine 107, and cysteine 111.

It belongs to the complex I 23 kDa subunit family. As to quaternary structure, NDH-1 is composed of 14 different subunits. Subunits NuoA, H, J, K, L, M, N constitute the membrane sector of the complex. It depends on [4Fe-4S] cluster as a cofactor.

Its subcellular location is the cell inner membrane. The enzyme catalyses a quinone + NADH + 5 H(+)(in) = a quinol + NAD(+) + 4 H(+)(out). Functionally, NDH-1 shuttles electrons from NADH, via FMN and iron-sulfur (Fe-S) centers, to quinones in the respiratory chain. The immediate electron acceptor for the enzyme in this species is believed to be ubiquinone. Couples the redox reaction to proton translocation (for every two electrons transferred, four hydrogen ions are translocated across the cytoplasmic membrane), and thus conserves the redox energy in a proton gradient. The polypeptide is NADH-quinone oxidoreductase subunit I (Orientia tsutsugamushi (strain Boryong) (Rickettsia tsutsugamushi)).